Here is a 204-residue protein sequence, read N- to C-terminus: Putative 3-methyladenine DNA glycosylase (204 aa).

This sequence belongs to the DNA glycosylase MPG family.

In Bacillus mycoides (strain KBAB4) (Bacillus weihenstephanensis), this protein is Putative 3-methyladenine DNA glycosylase.